A 218-amino-acid chain; its full sequence is Hypoxanthine-guanine phosphoribosyltransferase (218 aa).

An N-acetylalanine modification is found at Ala-2. Lys-69 contributes to the GMP binding site. Lys-103 is subject to N6-acetyllysine. A Glycyl lysine isopeptide (Lys-Gly) (interchain with G-Cter in SUMO1); alternate cross-link involves residue Lys-115. A Glycyl lysine isopeptide (Lys-Gly) (interchain with G-Cter in SUMO2); alternate cross-link involves residue Lys-115. GMP-binding positions include 134–142, Lys-166, 186–188, and Asp-194; these read EDIIDTGKT and KFV. Asp-138 (proton acceptor) is an active-site residue. The residue at position 142 (Thr-142) is a Phosphothreonine. Asp-194 provides a ligand contact to Mg(2+).

The protein belongs to the purine/pyrimidine phosphoribosyltransferase family. As to quaternary structure, homotetramer. It depends on Mg(2+) as a cofactor.

It localises to the cytoplasm. It catalyses the reaction IMP + diphosphate = hypoxanthine + 5-phospho-alpha-D-ribose 1-diphosphate. It carries out the reaction GMP + diphosphate = guanine + 5-phospho-alpha-D-ribose 1-diphosphate. The protein operates within purine metabolism; IMP biosynthesis via salvage pathway; IMP from hypoxanthine: step 1/1. Converts guanine to guanosine monophosphate, and hypoxanthine to inosine monophosphate. Transfers the 5-phosphoribosyl group from 5-phosphoribosylpyrophosphate onto the purine. Plays a central role in the generation of purine nucleotides through the purine salvage pathway. This Canis lupus familiaris (Dog) protein is Hypoxanthine-guanine phosphoribosyltransferase (HPRT1).